The sequence spans 1784 residues: Protein mel-28 (1784 aa).

The required for nuclear envelope and kinetochore localization stretch occupies residues 1–956 (MDNENSSIFK…QNDDEDMPEV (956 aa)). Residues 566 to 778 (GKIEEFCQLA…TSPEDSEHSE (213 aa)) are required for association with mitotic chromosomes. The interval 846 to 1071 (APMTVTIGKH…HNSILKTAKG (226 aa)) is important for nuclear localization. 2 disordered regions span residues 945–994 (KVQN…AKRI) and 1115–1784 (ETMT…RAKQ). Residues 1126-1149 (GKHDEEKDSEKNVVDEMEEVKDQE) are compositionally biased toward basic and acidic residues. 2 stretches are compositionally biased toward acidic residues: residues 1222–1232 (LEEEGEDEDIW) and 1266–1278 (VNEE…EEVQ). Positions 1239–1601 (FEVQMDEDCE…TTVDPSSSAL (363 aa)) are chromatin binding. Over residues 1279–1293 (QDAKEPEKTEKRQEE) the composition is skewed to basic and acidic residues. Residues 1297–1306 (EVMQPVIPEE) show a composition bias toward low complexity. Acidic residues predominate over residues 1321 to 1336 (ELQEEPDIVPTGDEDT). Residues 1337–1351 (ADKVQEQAVEEDRPP) show a composition bias toward basic and acidic residues. Residues 1352-1366 (SRNTRSSSVQKSTSQ) are compositionally biased toward polar residues. The segment covering 1367–1382 (VEDRDPKELVEEERPP) has biased composition (basic and acidic residues). The span at 1383–1398 (SRNTRSASVQKSSNQE) shows a compositional bias: polar residues. A compositionally biased stretch (basic and acidic residues) spans 1428 to 1444 (KVKDQKPEELIEEDRPP). Over residues 1445–1459 (SRNTRSASAQKTVAA) the composition is skewed to polar residues. Positions 1533-1546 (AAASTSSSRAGSVT) are enriched in low complexity. Acidic residues predominate over residues 1566-1576 (VQEEEEEEAEE). A compositionally biased stretch (polar residues) spans 1581 to 1606 (SRSTRSASVKNTTVDPSSSALASTKR). An important for nuclear localization region spans residues 1601–1784 (LASTKRTTSR…LLRSARRAKQ (184 aa)). A DNA-binding region (a.T hook 1) is located at residues 1630–1642 (TPKRGRPAKKDAG). Positions 1630-1784 (TPKRGRPAKK…LLRSARRAKQ (155 aa)) are required for chromosome segregation, nuclear growth, nucleoplasmic accumulation and cell cycle timing, but not required for nuclear envelope and kinetochore localization. Polar residues predominate over residues 1716–1735 (AGTSKQSRSVTRSRASSIDV). The a.T hook 2 DNA-binding region spans 1746 to 1758 (KRGRGRPPKTVLE).

In terms of tissue distribution, ubiquitously expressed (at protein level).

Its subcellular location is the nucleus. The protein resides in the nucleoplasm. It is found in the nucleus envelope. The protein localises to the nucleus inner membrane. It localises to the nuclear pore complex. Its subcellular location is the chromosome. The protein resides in the centromere. It is found in the kinetochore. Functionally, nuclear envelope protein which has essential roles in assembly of nuclear pore complexes and in chromatin maintenance during the cell cycle. Appears to be a stable structural component of the nuclear envelope during interphase. In dividing cells, localizes to kinetochores during early stages of mitosis and then to chromatin during late mitosis. Important for several mitotic processes including chromosome condensation, kinetochore assembly, chromosome segregation and cell-cycle timing. In postmitotic cells, plays a role in the early steps of nuclear pore complex assembly by recruiting the nucleoporins npp-10 and npp-5 to chromatin. Also involved in meiotic chromosome segregation. May function downstream of the Ran GTPase signaling pathway. This chain is Protein mel-28, found in Caenorhabditis elegans.